Consider the following 1074-residue polypeptide: MAPGMSGRGGAALLCLSALLAHASGRSHPASPSPPGPQASPVLPVSYRLSHTRLAFFLREARPPSPAVANSSLQRSEPFVVFQTKELPVLNVSLGPFSTSQVVARELLQPSSTLDIPERLTVNWKVRAFIVRSHVPASQPVVQVLFYVAGRDWDDFGVTERLPCVRLHAFRDAREVKSSCRLSGGLATCLVRAELPLAWFGPPAPAAPPTARRKSPDGLEPEATGESQQAELYYTLHAPDASGGCGGSRRGAGPGVGARAESPTQHPLLRIGSISLFRPPPRRTLQEHRLDSNLMIRLPDRPLKPGEVLSILLYLAPNSSSPSSPSVEHFTLRVKAKKGVTLLGTKSRSGQWHVTSELLTGAKHSTATVDVAWAQSTPLPPREGQGPLEILQLDFEMENFTSQSVKRRIMWHIDYRGHGALPDLERAVTELTVIQRDVQAILPLAMDTEIINTAILTGRTVAIPVKVIAIEVNGLVLDISALVECESDNEDIIKVSSSCDYVFVSGKESRGSMNARVTFRYDVLNAPLEMTVWVPKLPLHIELSDARLSQVKGWRVPILPDRRSVRESEDEDEEEEERRQSASRGCTLQYQHATLQVFTQFHTTSSEGTDQVVTMLGPDWLVEVTDLVSDFMRVGDPRVAHMVDSSTLAGLEPGTTPFKVVSPLTEAVLGETLLTVTEEKVSITQLQAQVVASLALSLRPSPGSSHTILATTAAQQTLSFLKQEALLSLWLSYSDGTTAPLSLYSPRDYGLLVSSLDEHVATVTQDRAFPLVVAEAEGSGELLRAELTIAESCQKTKRKSVLATTPVGLRVHFGRDEEDPTYDYPGPSQPGPGGGEDEARGAGPPGSALPAPEAPGPGTASPVVPPTEDFLPLPTGFLQVPRGLTDLEIGMYALLGVFCLAILVFLINCIVFVLRYRHKRIPPEGQTSMDHSHHWVFLGNGQPLRVQGELSPPAGNPLETVPAFCHGDHHSSGSSQTSVQSQVHGRGDGSSGGSARDQAEDPASSPTSKRKRVKFTTFTTLPSEELAYDSVPAGEEDEEEEEDLGWGCPDVAGPTRPTAPPDLHNYMRRIKEIA.

The signal sequence occupies residues 1–25 (MAPGMSGRGGAALLCLSALLAHASG). The Extracellular segment spans residues 26-893 (RSHPASPSPP…LTDLEIGMYA (868 aa)). N-linked (GlcNAc...) asparagine glycans are attached at residues Asn70 and Asn91. Disordered stretches follow at residues 202-226 (PPAP…ATGE) and 241-264 (ASGG…ESPT). Positions 243–256 (GGCGGSRRGAGPGV) are enriched in gly residues. 2 N-linked (GlcNAc...) asparagine glycosylation sites follow: Asn318 and Asn399. Disordered regions lie at residues 563 to 585 (RSVR…ASRG) and 814 to 867 (GRDE…VPPT). The span at 841-862 (GAGPPGSALPAPEAPGPGTASP) shows a compositional bias: low complexity. Residues 894–914 (LLGVFCLAILVFLINCIVFVL) traverse the membrane as a helical segment. At 915–1074 (RYRHKRIPPE…NYMRRIKEIA (160 aa)) the chain is on the cytoplasmic side. Positions 946 to 1063 (VQGELSPPAG…PTRPTAPPDL (118 aa)) are disordered. Residues 972-984 (SGSSQTSVQSQVH) are compositionally biased toward low complexity. Residues 1034–1044 (GEEDEEEEEDL) are compositionally biased toward acidic residues.

The protein belongs to the TMEM132 family.

The protein resides in the membrane. Its function is as follows. Required for normal inner ear hair cell function and hearing. This chain is Transmembrane protein 132E, found in Homo sapiens (Human).